We begin with the raw amino-acid sequence, 227 residues long: UPF0758 protein Pcryo_2119 (227 aa).

In terms of domain architecture, MPN spans 102–224 (GLGRSQMVKD…TLSYAENSLP (123 aa)). H173, H175, and D186 together coordinate Zn(2+). The short motif at 173–186 (HNHPHTDAKPSTAD) is the JAMM motif element.

This sequence belongs to the UPF0758 family.

This chain is UPF0758 protein Pcryo_2119, found in Psychrobacter cryohalolentis (strain ATCC BAA-1226 / DSM 17306 / VKM B-2378 / K5).